A 439-amino-acid polypeptide reads, in one-letter code: Sequestosome-1 (439 aa).

At Ala-2 the chain carries N-acetylalanine. Residues 2-48 form an interaction with LCK region; it reads ASLTVKAYLLGKEEAAREIRRFSFCFSPEPEAEAAAGPGPCERLLSR. Residues 3–100 enclose the PB1 domain; sequence SLTVKAYLLG…DIFRIYIKEK (98 aa). Ser-24 carries the post-translational modification Phosphoserine. An interaction with PRKCZ and dimerization region spans residues 41 to 105; sequence PCERLLSRVA…YIKEKKECRR (65 aa). An interaction with PAWR region spans residues 48 to 78; sequence RVAVLFPALRPGGFQAHYRDEDGDLVAFSSD. Residues 119 to 221 form an interaction with GABRR3 region; sequence VHPNVICDGC…DGRPCPTAES (103 aa). The segment at 120–170 adopts a ZZ-type zinc-finger fold; that stretch reads HPNVICDGCNGPVVGTRYKCSVCPDYDLCSVCEGKGLHREHSKLIFPNPFG. Residues Cys-125, Cys-128, Cys-139, and Cys-142 each coordinate Zn(2+). Tyr-145 is modified (phosphotyrosine). Zn(2+) contacts are provided by Cys-148, Cys-151, His-157, and His-160. Positions 167–217 are LIM protein-binding; sequence NPFGHLSDSFSHSRWLRKLKHGHFGWPGWEMGPPGNWSPRPPRAGDGRPCP. Phosphoserine occurs at positions 173, 175, and 204. The tract at residues 201-231 is disordered; that stretch reads GNWSPRPPRAGDGRPCPTAESASAPSEDPNV. The TRAF6-binding motif lies at 225-230; it reads PSEDPN. A phosphoserine mark is found at Ser-246 and Ser-263. The segment at 259-389 is disordered; it reads GGKRSRLTPT…ALYPHLPPEA (131 aa). Positions 265 to 292 are enriched in polar residues; it reads LTPTSAESSSTGTEDKSGTQPSSCSSEV. Thr-266 is subject to Phosphothreonine. Residues 266 to 439 form an interaction with NTRK1 region; it reads TPTSAESSST…IQYSKHPPPL (174 aa). Phosphoserine occurs at positions 269 and 281. Residue Cys-288 is the site of S-palmitoyl cysteine attachment. Phosphoserine occurs at positions 305, 327, and 331. The segment at 320–341 is MAP1LC3B-binding; sequence QPEELMESDNCSGGDDDWTHLS. The LIR motif lies at 335-340; that stretch reads DDWTHL. Residues 336-346 are compositionally biased toward basic and acidic residues; that stretch reads DWTHLSSKEVD. An interaction with KEAP1 region spans residues 346–351; that stretch reads DPSTGE. Phosphoserine occurs at positions 348, 354, 360, 364, and 365. Over residues 350-372 the composition is skewed to polar residues; it reads GELQSLQMPESEGPSSLDPSQEG. The UBA domain maps to 388–433; sequence EADPRLIESLSQMLSMGFSDEGGWLTRLLQTKNYDIGAALDTIQYS. Ser-402 is modified (phosphoserine; by ULK1 and TBK1). At Ser-406 the chain carries Phosphoserine. 2 positions are modified to N6-acetyllysine; alternate: Lys-419 and Lys-434. Residue Lys-419 forms a Glycyl lysine isopeptide (Lys-Gly) (interchain with G-Cter in ubiquitin); alternate linkage. A Glycyl lysine isopeptide (Lys-Gly) (interchain with G-Cter in SUMO2); alternate cross-link involves residue Lys-434.

Homooligomer or heterooligomer; may form homotypic arrays. Dimerization interferes with ubiquitin binding. Component of a ternary complex with PAWR and PRKCZ. Forms a complex with JUB/Ajuba, PRKCZ and TRAF6. Identified in a complex with TRAF6 and CYLD. Identified in a heterotrimeric complex with ubiquitin and ZFAND5, where ZFAND5 and SQSTM1 both interact with the same ubiquitin molecule. Interacts (via LIR motif) with MAP1LC3A and MAP1LC3B, as well as with other ATG8 family members, including GABARAP, GABARAPL1 and GABARAPL2; these interactions are necessary for the recruitment MAP1 LC3 family members to inclusion bodies containing polyubiquitinated protein aggregates and for their degradation by autophagy. Interacts directly with PRKCI and PRKCZ. Interacts with EBI3, LCK, RASA1, NR2F2, NTRK1, NTRK2, NTRK3, NBR1, MAP2K5 and MAPKAPK5. Upon TNF-alpha stimulation, interacts with RIPK1 probably bridging IKBKB to the TNF-R1 complex composed of TNF-R1/TNFRSF1A, TRADD and RIPK1. Interacts with the proteasome subunits PSMD4 and PSMC2. Interacts with TRAF6. Interacts with 'Lys-63'-linked polyubiquitinated MAPT/TAU. Interacts with FHOD3. Interacts with CYLD. Interacts with SESN1. Interacts with SESN2. Interacts with ULK1. Interacts with UBD. Interacts with WDR81; the interaction is direct and regulates the interaction of SQSTM1 with ubiquitinated proteins. Interacts with WDFY3; this interaction is required to recruit WDFY3 to cytoplasmic bodies and to PML bodies. Interacts with LRRC25. Interacts with STING1; leading to relocalization of STING1 to autophagosomes. Interacts (when phosphorylated at Ser-348) with KEAP1; the interaction is direct and inactivates the BCR(KEAP1) complex by sequestering KEAP1 in inclusion bodies, promoting its degradation. Interacts with MOAP1; promoting dissociation of SQSTM1 inclusion bodies that sequester KEAP1. Interacts with GBP1. Interacts with TAX1BP1. Interacts with (ubiquitinated) PEX5; specifically binds PEX5 ubiquitinated at 'Lys-209' in response to reactive oxygen species (ROS). Interacts (via PB1 domain) with TNS2; the interaction leads to sequestration of TNS2 in cytoplasmic aggregates with SQSTM1 and promotes TNS2 ubiquitination and proteasomal degradation. Interacts with IRS1; the interaction is disrupted by the presence of tensin TNS2. Interacts with TRIM5. Interacts with TRIM11 (when ubiquitinated); promoting AIM2 recruitment to autophagosomes and autophagy-dependent degradation of AIM2. Interacts with TRIM13. Interacts with TRIM16. Interacts with TRIM23. Interacts with TRIM50. Interacts with TRIM55. Interacts with ECSIT; this interaction inhibits TLR4 signaling via functional regulation of the TRAF6-ECSIT complex. Interacts with GABRR1, GABRR2 and GABRR3. Interacts with WDR83. Interacts with GRB2. Interacts with USP12; the interaction is independent of USP12 deubiquitinase activity and may be involved in regulation of autophagic flux. Interacts with ASB6. Phosphorylated. Phosphorylation at Ser-406 by ULK1 destabilizes the UBA dimer interface and increases binding affinity to ubiquitinated proteins. Phosphorylation at Ser-406 also primes for subsequent phosphorylation at Ser-402. Phosphorylation at Ser-402 by CK2 or ULK1 promotes binding to ubiquitinated proteins by increasing the affinity between the UBA domain and polyubiquitin chains. Phosphorylation at Ser-402 by ULK1 is stimulated by SESN2. Phosphorylated at Ser-402 by TBK1, leading to promote relocalization of 'Lys-63'-linked ubiquitinated STING1 to autophagosomes. Phosphorylation at Ser-348 by ULK1 promotes interaction with KEAP1 and inactivation of the BCR(KEAP1) complex, promoting NFE2L2/NRF2 nuclear accumulation and expression of phase II detoxifying enzymes. Phosphorylated in vitro by TTN. Post-translationally, ubiquitinated by UBE2J1 and RNF26 at Lys-434: ubiquitinated SQSTM1 attracts specific vesicle-associated adapters, forming a molecular bridge that restrains cognate vesicles in the perinuclear region and organizes the endosomal pathway for efficient cargo transport. Ubiquitination by UBE2D2 and UBE2D3 increases its ability to bind polyubiquitin chains by destabilizing the UBA dimer interface. Deubiquitination by USP15 releases target vesicles for fast transport into the cell periphery. Ubiquitinated by the BCR(KEAP1) complex at Lys-419, increasing SQSTM1 sequestering activity and promoting its degradation. Ubiquitinated via 'Lys-29' and 'Lys-33'-linked polyubiquitination leading to xenophagic targeting of bacteria and inhibition of their replication. In terms of processing, acetylated at Lys-419 and Lys-434 by KAT5/TIP60, promotes activity by destabilizing the UBA dimer interface and increases binding affinity to ubiquitinated proteins. Deacetylated by HDAC6. Palmitoylation at Cys-288 by ZDHHC19 is required for efficient autophagic degradation of SQSTM1-cargo complexes by promoting affinity for ATG8 proteins and recruitment of p62 bodies to autophagosomes. Dealmitoylated at Cys-288 by LYPLA1. Ubiquitously expressed. In brain, mainly expressed by neurons, especially pyramidal neurons in the cerebral cortex and hippocampus. Also expressed by Purkinje cells and neurons in the dentate nucleus of the cerebellum and neurons of the basal ganglia (at protein level).

Its subcellular location is the cytoplasmic vesicle. It is found in the autophagosome. The protein resides in the preautophagosomal structure. It localises to the cytoplasm. The protein localises to the cytosol. Its subcellular location is the nucleus. It is found in the PML body. The protein resides in the late endosome. It localises to the lysosome. The protein localises to the endoplasmic reticulum. Its subcellular location is the myofibril. It is found in the sarcomere. Its function is as follows. Molecular adapter required for selective macroautophagy (aggrephagy) by acting as a bridge between polyubiquitinated proteins and autophagosomes. Promotes the recruitment of ubiquitinated cargo proteins to autophagosomes via multiple domains that bridge proteins and organelles in different steps. SQSTM1 first mediates the assembly and removal of ubiquitinated proteins by undergoing liquid-liquid phase separation upon binding to ubiquitinated proteins via its UBA domain, leading to the formation of insoluble cytoplasmic inclusions, known as p62 bodies. SQSTM1 then interacts with ATG8 family proteins on autophagosomes via its LIR motif, leading to p62 body recruitment to autophagosomes, followed by autophagic clearance of ubiquitinated proteins. SQSTM1 is itself degraded along with its ubiquitinated cargos. Also required to recruit ubiquitinated proteins to PML bodies in the nucleus. Also involved in autophagy of peroxisomes (pexophagy) in response to reactive oxygen species (ROS) by acting as a bridge between ubiquitinated PEX5 receptor and autophagosomes. Acts as an activator of the NFE2L2/NRF2 pathway via interaction with KEAP1: interaction inactivates the BCR(KEAP1) complex by sequestering the complex in inclusion bodies, promoting nuclear accumulation of NFE2L2/NRF2 and subsequent expression of cytoprotective genes. Promotes relocalization of 'Lys-63'-linked ubiquitinated STING1 to autophagosomes. Involved in endosome organization by retaining vesicles in the perinuclear cloud: following ubiquitination by RNF26, attracts specific vesicle-associated adapters, forming a molecular bridge that restrains cognate vesicles in the perinuclear region and organizes the endosomal pathway for efficient cargo transport. Sequesters tensin TNS2 into cytoplasmic puncta, promoting TNS2 ubiquitination and proteasomal degradation. May regulate the activation of NFKB1 by TNF-alpha, nerve growth factor (NGF) and interleukin-1. May play a role in titin/TTN downstream signaling in muscle cells. Adapter that mediates the interaction between TRAF6 and CYLD. More potent than isoform 2 to stimulate PRKCZ-dependent phosphorylation of KCNAB2. This Rattus norvegicus (Rat) protein is Sequestosome-1 (Sqstm1).